Consider the following 493-residue polypeptide: Glutamyl-tRNA(Gln) amidotransferase subunit A (493 aa).

Active-site charge relay system residues include K79 and S159. S183 acts as the Acyl-ester intermediate in catalysis.

Belongs to the amidase family. GatA subfamily. Heterotrimer of A, B and C subunits.

The catalysed reaction is L-glutamyl-tRNA(Gln) + L-glutamine + ATP + H2O = L-glutaminyl-tRNA(Gln) + L-glutamate + ADP + phosphate + H(+). Its function is as follows. Allows the formation of correctly charged Gln-tRNA(Gln) through the transamidation of misacylated Glu-tRNA(Gln) in organisms which lack glutaminyl-tRNA synthetase. The reaction takes place in the presence of glutamine and ATP through an activated gamma-phospho-Glu-tRNA(Gln). The polypeptide is Glutamyl-tRNA(Gln) amidotransferase subunit A (Rhizobium meliloti (strain 1021) (Ensifer meliloti)).